Consider the following 156-residue polypeptide: MSEKEQKEVEAKESSGKAEERRETREKQVRGDVGIAWIYASYNNTIIHITDLSGAETIAFASGGMVAKADRDKPSPWAAMQAAARAAKIALDKGIRVVHVKIKAPGGYGPKTPGPGAGPAIRALVRAGLMVDRIEDVTPLPTDSIRKPGGRRGRRV.

The interval 1–27 (MSEKEQKEVEAKESSGKAEERRETREK) is disordered.

The protein belongs to the universal ribosomal protein uS11 family. In terms of assembly, part of the 30S ribosomal subunit.

Located on the platform of the 30S subunit. This is Small ribosomal subunit protein uS11 from Thermofilum pendens (strain DSM 2475 / Hrk 5).